The following is a 93-amino-acid chain: SH3 domain-binding glutamic acid-rich-like protein 3 (93 aa).

S2 is subject to N-acetylserine. The region spanning 2–93 is the Glutaredoxin domain; that stretch reads SGLRVYSTSV…NTLQEFLKLA (92 aa). O-linked (GalNAc...) threonine glycosylation occurs at T9.

Belongs to the SH3BGR family. In terms of assembly, interacts with MYO1C (via its IQ motifs); the interaction is dependent on calcium and takes place at membrane ruffles. May be glycosylated. Expressed in heart, liver, lung, kidney, spleen, thymus, ovarian follicles, skeletal muscle, brain, lymph node and mammary epithelial and stromal cells (at protein level).

It localises to the cytoplasm. It is found in the cytosol. The protein localises to the cell projection. Its subcellular location is the ruffle membrane. The protein resides in the nucleus. Could act as a modulator of glutaredoxin biological activity. May play a role in cytoskeleton organization. This Rattus norvegicus (Rat) protein is SH3 domain-binding glutamic acid-rich-like protein 3.